Consider the following 1121-residue polypeptide: Solute carrier family 38 member 10 (1121 aa).

10 consecutive transmembrane segments (helical) span residues 4-24 (AAAS…GVSV), 36-58 (IVLG…MFLV), 84-104 (LVET…YVVI), 120-140 (VGGT…VLPL), 153-173 (FSAM…LSSL), 229-249 (IFAS…FFGY), 272-292 (MLRV…ILPC), 323-343 (ALTL…PNVE), 345-365 (ILGL…PALI), and 378-398 (VVLW…LSVS). Disordered regions lie at residues 434-691 (VVAV…EEAG), 731-904 (KEIH…AATG), and 965-1068 (ISDG…ELAP). Basic and acidic residues-rich tracts occupy residues 439–454 (EDGR…REEL), 466–475 (PGREDGKEAQ), 493–508 (EAHR…KVVV), and 544–559 (DSER…EVGK). Serine 612 is modified (phosphoserine). 6 stretches are compositionally biased toward basic and acidic residues: residues 645 to 659 (DSDH…EEKP), 668 to 679 (EPREQRDVERAG), 731 to 752 (KEIH…EVHP), 763 to 773 (EAPEGKARETM), 802 to 811 (SLEHPERPVG), and 863 to 876 (PARE…RLAE). A Phosphothreonine modification is found at threonine 772. Serine 802 carries the phosphoserine modification. Phosphoserine occurs at positions 890 and 966. Over residues 976–998 (HRLDHGGYLEMRKEARGGDHMPV) the composition is skewed to basic and acidic residues. Serine 999 carries the post-translational modification Phosphoserine. Basic and acidic residues-rich tracts occupy residues 1035-1044 (DNAKPNRDLK) and 1057-1068 (DLGPHAEGELAP).

The protein belongs to the amino acid/polyamine transporter 2 family.

The protein resides in the membrane. The catalysed reaction is L-glutamate(out) = L-glutamate(in). The enzyme catalyses L-glutamine(out) = L-glutamine(in). It catalyses the reaction L-alanine(in) = L-alanine(out). It carries out the reaction L-serine(in) = L-serine(out). The catalysed reaction is L-leucine(in) = L-leucine(out). Its function is as follows. Facilitates bidirectional transport of amino acids. May act as a glutamate sensor that regulates glutamate-glutamine cycle and mTOR signaling in the brain. The transport mechanism remains to be elucidated. This is Solute carrier family 38 member 10 from Pongo abelii (Sumatran orangutan).